The primary structure comprises 415 residues: Fructose-like permease IIC component 1 (415 aa).

Residues 1–46 (MAIKKRSATVVPGASGAAAAVKNPQASKTSFWGELPQHVMSGISRM) lie on the Cytoplasmic side of the membrane. In terms of domain architecture, PTS EIIC type-2 spans 35–410 (LPQHVMSGIS…RLMMFRKGKL (376 aa)). Residues 47–67 (VPTLIMGGVILAFSQLIAYSW) traverse the membrane as a helical segment. Residues 68 to 101 (LKIPAEIGIMDALNSGKFSGFDLSLLKFAWLSQS) are Periplasmic-facing. Residues 102-122 (FGGVLFGFAIPMFAAFVANSI) traverse the membrane as a helical segment. Residues 123-126 (GGKL) are Cytoplasmic-facing. Residues 127 to 147 (AFPAGFIGGLMSTQPTQLLNF) form a helical membrane-spanning segment. Topologically, residues 148–157 (DPSTMQWATS) are periplasmic. Residues 158-178 (SPVPSTFIGALIISIVAGYLV) form a helical membrane-spanning segment. The Cytoplasmic segment spans residues 179–197 (KWMNQKIQLPDFLLAFKTT). Residues 198–218 (FLLPILSAIFVMLAMYYVITP) traverse the membrane as a helical segment. At 219-237 (FGGWINGGIRTVLTAAGEK) the chain is on the periplasmic side. Residues 238–258 (GALMYAMGIAAATAIDLGGPI) form a helical membrane-spanning segment. Over 259 to 276 (NKAAGFVAFSFTTDHVLP) the chain is Cytoplasmic. Residues 277–297 (VTARSIAIVIPPIGLGLATII) form a helical membrane-spanning segment. Over 298–318 (DRRLTGKRLFNAQLYPQGKTA) the chain is Periplasmic. The chain crosses the membrane as a helical span at residues 319-339 (MFLAFMGISEGAIPFALESPI). Topologically, residues 340 to 341 (TA) are cytoplasmic. The helical transmembrane segment at 342–362 (IPSYMVGAIVGSTAAVWLGAV) threads the bilayer. Over 363 to 378 (QWFPESAIWAWPLVTN) the chain is Periplasmic. The helical transmembrane segment at 379-399 (LGVYMAGIALGAVITALMVVF) threads the bilayer. The Cytoplasmic segment spans residues 400 to 415 (LRLMMFRKGKLLIDSL).

Its subcellular location is the cell inner membrane. In terms of biological role, the phosphoenolpyruvate-dependent sugar phosphotransferase system (PTS), a major carbohydrate active -transport system, catalyzes the phosphorylation of incoming sugar substrates concomitant with their translocation across the cell membrane. This Escherichia coli (strain K12) protein is Fructose-like permease IIC component 1 (fryC).